Consider the following 389-residue polypeptide: Succinate--CoA ligase [ADP-forming] subunit beta (389 aa).

Positions 9-244 (KELLRQFNVP…IDEEDAAEIE (236 aa)) constitute an ATP-grasp domain. ATP is bound by residues Lys46, 53–55 (GRG), Glu99, Ala102, and Glu107. Mg(2+) is bound by residues Asn199 and Asp213. Residues Asn264 and 321–323 (GIM) contribute to the substrate site.

The protein belongs to the succinate/malate CoA ligase beta subunit family. Heterotetramer of two alpha and two beta subunits. The cofactor is Mg(2+).

The catalysed reaction is succinate + ATP + CoA = succinyl-CoA + ADP + phosphate. It catalyses the reaction GTP + succinate + CoA = succinyl-CoA + GDP + phosphate. It functions in the pathway carbohydrate metabolism; tricarboxylic acid cycle; succinate from succinyl-CoA (ligase route): step 1/1. In terms of biological role, succinyl-CoA synthetase functions in the citric acid cycle (TCA), coupling the hydrolysis of succinyl-CoA to the synthesis of either ATP or GTP and thus represents the only step of substrate-level phosphorylation in the TCA. The beta subunit provides nucleotide specificity of the enzyme and binds the substrate succinate, while the binding sites for coenzyme A and phosphate are found in the alpha subunit. The sequence is that of Succinate--CoA ligase [ADP-forming] subunit beta from Polynucleobacter asymbioticus (strain DSM 18221 / CIP 109841 / QLW-P1DMWA-1) (Polynucleobacter necessarius subsp. asymbioticus).